The sequence spans 79 residues: Peptide Im-5 (79 aa).

The first 23 residues, 1–23, serve as a signal peptide directing secretion; the sequence is MKYRKQLLVLFFAYFLVVNESEA. Residues 49 to 79 constitute a propeptide that is removed on maturation; sequence RALMKRDLQDRMDPYQRNLKLDRYLKQLALD.

The protein belongs to the non-disulfide-bridged peptide (NDBP) superfamily. Medium-length antimicrobial peptide (group 3) family. In terms of tissue distribution, expressed by the venom gland.

The protein resides in the secreted. It is found in the target cell membrane. In terms of biological role, antimicrobial peptide that may act by disrupting the integrity of the bacterial cell membrane. Has antibacterial activity against Gram-negative bacterium E.coli NBRC 3972 (MIC=10 uM) and against Gram-positive bacteria S.aureus NBRC 13276 (MIC=2.5-5 uM) and B.subtilis NBRC 3009 (MIC=0.5-1 uM). Also shows potent activity against antibiotic-sensitive and -resistant Acinetobacter baumannii (MIC=1.8-3.6 uM). Shows cytolytic activity against human and sheep erythrocytes. Toxic to cricket A.domestica. The sequence is that of Peptide Im-5 from Isometrus maculatus (Lesser brown scorpion).